The chain runs to 170 residues: Small ribosomal subunit protein mS41 (170 aa).

A mitochondrion-targeting transit peptide spans 1 to 20 (MFRTLLSSTVRSIQLKPVTS).

It belongs to the mitochondrion-specific ribosomal protein mS41 family. As to quaternary structure, component of the mitochondrial small ribosomal subunit (mt-SSU).

The protein localises to the mitochondrion. Functionally, component of the mitochondrial ribosome (mitoribosome), a dedicated translation machinery responsible for the synthesis of mitochondrial genome-encoded proteins, including at least some of the essential transmembrane subunits of the mitochondrial respiratory chain. The mitoribosomes are attached to the mitochondrial inner membrane and translation products are cotranslationally integrated into the membrane. mS41 is involved in telomere length regulation. This Candida albicans (strain SC5314 / ATCC MYA-2876) (Yeast) protein is Small ribosomal subunit protein mS41 (FYV4).